We begin with the raw amino-acid sequence, 926 residues long: MSRFFATGSDSESEESSSADEITPKAAGTTLRQQALLLSDDEEDTKRVVRSAKDKRFEELTNLIKTIRNAIKIRGISKCLEEFEQLCRAFVKSKTIVDKEGVPKFYIRLLADLEDYLNQLWEDKEGKKKMNKNNAKALSTLRQKIRKYNRDFETEIASYKENPEQSADEEEEKDDIGSGSSESDDDDDDDITAKSFMKKKPQEEEKKAPEASKFLKGAADEESESDDDEDSEDWASDSVGSDSESEDNDGTAASLAVVFLKKDVGEKASDRKKDDRRRRHKKKERIEEEAEEEGEAEEGGWEKVKGGVPLVKEKPKMFAKGTEINTGVVVKKLSEILQARGKKGTDRAAQIELLHALAGIAAENNLGEGILVKIKFNIIASLYDYNPNLAAFMKADMWKKCLDCIDELLDILFNNNNIFIGENIAEDSENLAISDQPFRVRGCILTLVERMDEEFTKIMQNTDPHSQEYVDNLKDEGRVCGIIDRLLQYLETKGSTEEVCRVYLRRIMHTYYKFDYKAHRRSLGLQGETKSEQDQEESEGDDSAIIMDRLCKFIYAKDRTDRIRTCAILCHIYHHALHSRWYQARDLMLMSHLQDNIQHADPPVQILYNRTMVQLGICAFRQGMIKDAHNALLDIQSSGRAKELLGQGLLMRNMQERNAEQEKIEKRRQVPFHMHINLELLECVYLVSAMLLEIPYMAAHEFDARRRMISKQFHHQLRVGERQPLLGPPESMREHVVAASKAMKMGDWRTCHSFIINEKMNSKVWDLFPEAKCVREMLVRKIQEESLRTYLFTYSSVYDSISMETLSEMFELELPTVHSIISKMIINEELMASLDQPTQTVVMHRTEPTSLQNMALQLAEKLGGLVENNERVFDLKQGVYGGYFNRDQKGGYQQKQGYQRGDQKGGYQQKQNYQRGGYRNQNQSSY.

Disordered regions lie at residues 1–27 (MSRF…PKAA), 157–251 (ASYK…NDGT), and 266–300 (EKAS…EEGG). The segment covering 200–210 (KPQEEEKKAPE) has biased composition (basic and acidic residues). The segment covering 220–235 (DEESESDDDEDSEDWA) has biased composition (acidic residues). Positions 274–283 (DDRRRRHKKK) are enriched in basic residues. Residues 287–299 (EEEAEEEGEAEEG) show a composition bias toward acidic residues. The PCI domain maps to 672-848 (FHMHINLELL…QTVVMHRTEP (177 aa)). Low complexity predominate over residues 890-919 (GGYQQKQGYQRGDQKGGYQQKQNYQRGGYR). The disordered stretch occupies residues 890-926 (GGYQQKQGYQRGDQKGGYQQKQNYQRGGYRNQNQSSY).

The protein belongs to the eIF-3 subunit C family. In terms of assembly, component of the eukaryotic translation initiation factor 3 (eIF-3) complex, which is composed of 13 subunits: eif3a, eif3b, eif3c, eif3d, eif3e, eif3f, eif3g, eif3h, eif3i, eif3j, eif3k, eif3l and eif3m.

Its subcellular location is the cytoplasm. Its function is as follows. Component of the eukaryotic translation initiation factor 3 (eIF-3) complex, which is involved in protein synthesis of a specialized repertoire of mRNAs and, together with other initiation factors, stimulates binding of mRNA and methionyl-tRNAi to the 40S ribosome. The eIF-3 complex specifically targets and initiates translation of a subset of mRNAs involved in cell proliferation. In Danio rerio (Zebrafish), this protein is Eukaryotic translation initiation factor 3 subunit C (eif3c).